Reading from the N-terminus, the 218-residue chain is Adenylate kinase (218 aa).

10 to 15 (GAGKGT) is an ATP binding site. Positions 30-59 (STGDMFRAAMADQTDLGVKAKAFIDKGELV) are NMP. AMP-binding positions include T31, R36, 57 to 59 (ELV), 85 to 88 (GFPR), and Q92. The interval 126-164 (GRFICKTCGATYHKLYHPTQVEGTCDRCGGHVFFQREDD) is LID. Position 127 (R127) interacts with ATP. The Zn(2+) site is built by C130 and C133. Residue 136-137 (TY) coordinates ATP. Zn(2+)-binding residues include C150 and C153. Residues R161 and R172 each coordinate AMP. Q200 is a binding site for ATP.

Belongs to the adenylate kinase family. Monomer.

The protein localises to the cytoplasm. The enzyme catalyses AMP + ATP = 2 ADP. Its pathway is purine metabolism; AMP biosynthesis via salvage pathway; AMP from ADP: step 1/1. Functionally, catalyzes the reversible transfer of the terminal phosphate group between ATP and AMP. Plays an important role in cellular energy homeostasis and in adenine nucleotide metabolism. The polypeptide is Adenylate kinase (Latilactobacillus sakei subsp. sakei (strain 23K) (Lactobacillus sakei subsp. sakei)).